The chain runs to 119 residues: Protein RALF-like 22 (119 aa).

The N-terminal stretch at 1–23 is a signal peptide; it reads MTNTRAIYAVIAILAIVISAVES. A propeptide spans 24–70 (removed in mature form); that stretch reads TGDFGDSLDFVRAGSSSLFSGCTGSIAECIAEEEEMEFDSDISRRIL. 2 disulfide bridges follow: cysteine 88–cysteine 98 and cysteine 111–cysteine 117.

This sequence belongs to the plant rapid alkalinization factor (RALF) family. Post-translationally, proteolytically cleaved, probably by S1P, a subtilisin-like serine protease (subtilase).

It localises to the secreted. In terms of biological role, cell signaling peptide that may regulate plant stress, growth, and development. Mediates a rapid alkalinization of extracellular space by mediating a transient increase in the cytoplasmic Ca(2+) concentration leading to a calcium-dependent signaling events through a cell surface receptor and a concomitant activation of some intracellular mitogen-activated protein kinases. The polypeptide is Protein RALF-like 22 (RALFL22) (Arabidopsis thaliana (Mouse-ear cress)).